Consider the following 171-residue polypeptide: Adenine phosphoribosyltransferase (171 aa).

It belongs to the purine/pyrimidine phosphoribosyltransferase family. As to quaternary structure, homodimer.

The protein localises to the cytoplasm. The enzyme catalyses AMP + diphosphate = 5-phospho-alpha-D-ribose 1-diphosphate + adenine. Its pathway is purine metabolism; AMP biosynthesis via salvage pathway; AMP from adenine: step 1/1. In terms of biological role, catalyzes a salvage reaction resulting in the formation of AMP, that is energically less costly than de novo synthesis. The sequence is that of Adenine phosphoribosyltransferase from Natranaerobius thermophilus (strain ATCC BAA-1301 / DSM 18059 / JW/NM-WN-LF).